We begin with the raw amino-acid sequence, 184 residues long: Potassium-transporting ATPase KdpC subunit (184 aa).

A helical membrane pass occupies residues 10–30; the sequence is LTFLMVVLFAVIYPLAIYGIA.

Belongs to the KdpC family. In terms of assembly, the system is composed of three essential subunits: KdpA, KdpB and KdpC.

It is found in the cell inner membrane. Functionally, part of the high-affinity ATP-driven potassium transport (or Kdp) system, which catalyzes the hydrolysis of ATP coupled with the electrogenic transport of potassium into the cytoplasm. This subunit acts as a catalytic chaperone that increases the ATP-binding affinity of the ATP-hydrolyzing subunit KdpB by the formation of a transient KdpB/KdpC/ATP ternary complex. The polypeptide is Potassium-transporting ATPase KdpC subunit (Flavobacterium psychrophilum (strain ATCC 49511 / DSM 21280 / CIP 103535 / JIP02/86)).